The primary structure comprises 39 residues: Photosystem II reaction center protein L (39 aa).

A helical membrane pass occupies residues 18–38 (SLYLGLLSVLVLGILFSSYFF).

This sequence belongs to the PsbL family. In terms of assembly, PSII is composed of 1 copy each of membrane proteins PsbA, PsbB, PsbC, PsbD, PsbE, PsbF, PsbH, PsbI, PsbJ, PsbK, PsbL, PsbM, PsbT, PsbX, PsbY, Psb30/Ycf12, peripheral proteins PsbO, CyanoQ (PsbQ), PsbU, PsbV and a large number of cofactors. It forms dimeric complexes.

It localises to the cellular thylakoid membrane. One of the components of the core complex of photosystem II (PSII). PSII is a light-driven water:plastoquinone oxidoreductase that uses light energy to abstract electrons from H(2)O, generating O(2) and a proton gradient subsequently used for ATP formation. It consists of a core antenna complex that captures photons, and an electron transfer chain that converts photonic excitation into a charge separation. This subunit is found at the monomer-monomer interface and is required for correct PSII assembly and/or dimerization. The sequence is that of Photosystem II reaction center protein L from Prochlorococcus marinus subsp. pastoris (strain CCMP1986 / NIES-2087 / MED4).